A 688-amino-acid polypeptide reads, in one-letter code: Sodium channel and clathrin linker 1 (688 aa).

Ala-2 is modified (N-acetylalanine). Residues 59–673 (LIAEYEKHLE…SASQQLSVIT (615 aa)) are a coiled coil. Ser-681 bears the Phosphoserine mark.

In terms of assembly, interacts with SCN10A and clathrin. Identified in a complex containing SCN10A, clathrin and SCLT1. As to expression, detected in small neurons in dorsal root ganglia. Detected in C-type fibers of sciatic nerve (at protein level).

The protein resides in the cytoplasm. The protein localises to the cytoskeleton. It localises to the microtubule organizing center. Its subcellular location is the centrosome. It is found in the centriole. Adapter protein that links SCN10A to clathrin. Regulates SCN10A channel activity, possibly by promoting channel internalization. The protein is Sodium channel and clathrin linker 1 (Sclt1) of Rattus norvegicus (Rat).